We begin with the raw amino-acid sequence, 101 residues long: Urease subunit beta (101 aa).

The protein belongs to the urease beta subunit family. In terms of assembly, heterotrimer of UreA (gamma), UreB (beta) and UreC (alpha) subunits. Three heterotrimers associate to form the active enzyme.

Its subcellular location is the cytoplasm. It catalyses the reaction urea + 2 H2O + H(+) = hydrogencarbonate + 2 NH4(+). The protein operates within nitrogen metabolism; urea degradation; CO(2) and NH(3) from urea (urease route): step 1/1. This chain is Urease subunit beta, found in Ralstonia pickettii (strain 12J).